The sequence spans 92 residues: Protein EMB-1 (92 aa).

Basic and acidic residues-rich tracts occupy residues methionine 1–glutamine 16, alanine 37–arginine 61, and glycine 72–lysine 92. A disordered region spans residues methionine 1 to lysine 92.

The protein belongs to the small hydrophilic plant seed protein family. In terms of tissue distribution, expressed in embryogenic cells, somatic embryos and seeds at the later stages of development. In the embryos, expressed in the procambium, the root and shoot meristem and the protoderm of the cotyledons. Not detected in the endosperm or the aleurone layer, in young leaves or roots.

The protein localises to the nucleus. The chain is Protein EMB-1 from Daucus carota (Wild carrot).